A 307-amino-acid polypeptide reads, in one-letter code: Transcriptional repressor scratch 2 (307 aa).

An SNAG domain region spans residues 1 to 20 (MPRSFLVKKIKGDGFQCSGV). Disordered regions lie at residues 34 to 90 (LPGA…PQSS) and 116 to 148 (GRSRRRRGGGGGDAGGSGDAGGAGGRAGRAGAQ). Gly residues predominate over residues 124-148 (GGGGDAGGSGDAGGAGGRAGRAGAQ). 4 consecutive C2H2-type zinc fingers follow at residues 155 to 177 (HACAECGKTYATSSNLSRHKQTH), 186 to 208 (RKCPTCGKAYVSMPALAMHLLTH), 212 to 234 (HKCGVCGKAFSRPWLLQGHMRSH), and 240 to 262 (FGCAHCGKAFADRSNLRAHMQTH). Residues 268-291 (YRCRQCDKSFALKSYLHKHCEAAC) form a C2H2-type 5; atypical zinc finger.

Belongs to the snail C2H2-type zinc-finger protein family.

It is found in the nucleus. Functionally, may be involved in transcriptional regulation. The chain is Transcriptional repressor scratch 2 (SCRT2) from Homo sapiens (Human).